The primary structure comprises 92 residues: Small ribosomal subunit protein uS19 (92 aa).

The protein belongs to the universal ribosomal protein uS19 family.

Protein S19 forms a complex with S13 that binds strongly to the 16S ribosomal RNA. The polypeptide is Small ribosomal subunit protein uS19 (Bacillus mycoides (strain KBAB4) (Bacillus weihenstephanensis)).